The primary structure comprises 153 residues: NADPH-dependent 7-cyano-7-deazaguanine reductase (153 aa).

The segment at 1 to 30 is disordered; sequence MDSIETHAKQLGQQTPLPASPEAAQLDRVP. Catalysis depends on Cys51, which acts as the Thioimide intermediate. Asp58 functions as the Proton donor in the catalytic mechanism. Residues 73–75 and 92–93 each bind substrate; these read VES and HE.

The protein belongs to the GTP cyclohydrolase I family. QueF type 1 subfamily.

The protein localises to the cytoplasm. It catalyses the reaction 7-aminomethyl-7-carbaguanine + 2 NADP(+) = 7-cyano-7-deazaguanine + 2 NADPH + 3 H(+). It functions in the pathway tRNA modification; tRNA-queuosine biosynthesis. Functionally, catalyzes the NADPH-dependent reduction of 7-cyano-7-deazaguanine (preQ0) to 7-aminomethyl-7-deazaguanine (preQ1). This chain is NADPH-dependent 7-cyano-7-deazaguanine reductase, found in Methylorubrum extorquens (strain CM4 / NCIMB 13688) (Methylobacterium extorquens).